The sequence spans 434 residues: Chaperone SurA (434 aa).

A signal peptide spans 1-22 (MKHSKKIVTALLALAMSQTVMA). 2 PpiC domains span residues 173 to 274 (EVEF…KVMD) and 283 to 383 (VEEV…QLMD).

The protein localises to the periplasm. It carries out the reaction [protein]-peptidylproline (omega=180) = [protein]-peptidylproline (omega=0). Its function is as follows. Chaperone involved in the correct folding and assembly of outer membrane proteins. Recognizes specific patterns of aromatic residues and the orientation of their side chains, which are found more frequently in integral outer membrane proteins. May act in both early periplasmic and late outer membrane-associated steps of protein maturation. The polypeptide is Chaperone SurA (Shewanella denitrificans (strain OS217 / ATCC BAA-1090 / DSM 15013)).